The chain runs to 906 residues: Protein translocase subunit SecA (906 aa).

ATP is bound by residues Q89, 107-111 (GEGKT), and D502. C890, C892, C901, and H902 together coordinate Zn(2+).

Belongs to the SecA family. As to quaternary structure, monomer and homodimer. Part of the essential Sec protein translocation apparatus which comprises SecA, SecYEG and auxiliary proteins SecDF-YajC and YidC. Zn(2+) serves as cofactor.

The protein resides in the cell inner membrane. It is found in the cytoplasm. The enzyme catalyses ATP + H2O + cellular proteinSide 1 = ADP + phosphate + cellular proteinSide 2.. In terms of biological role, part of the Sec protein translocase complex. Interacts with the SecYEG preprotein conducting channel. Has a central role in coupling the hydrolysis of ATP to the transfer of proteins into and across the cell membrane, serving both as a receptor for the preprotein-SecB complex and as an ATP-driven molecular motor driving the stepwise translocation of polypeptide chains across the membrane. The polypeptide is Protein translocase subunit SecA (Bartonella quintana (strain Toulouse) (Rochalimaea quintana)).